A 52-amino-acid chain; its full sequence is Light-harvesting protein B-870 alpha chain (52 aa).

The Cytoplasmic segment spans residues 1 to 15 (MAKFYKIWLIFDPRR). A helical membrane pass occupies residues 16 to 36 (VFVAQGVFLFLLAAMIHLVVL). Residue H32 participates in a bacteriochlorophyll binding. At 37-52 (SSGLNWFEAAAAVGGQ) the chain is on the periplasmic side.

It belongs to the antenna complex alpha subunit family. In terms of assembly, the core complex is formed by different alpha and beta chains, binding bacteriochlorophyll molecules, and arranged most probably in tetrameric structures disposed around the reaction center. The non-pigmented gamma chains may constitute additional components.

It is found in the cell inner membrane. Its function is as follows. Antenna complexes are light-harvesting systems, which transfer the excitation energy to the reaction centers. This chain is Light-harvesting protein B-870 alpha chain (pufA), found in Roseobacter denitrificans (strain ATCC 33942 / OCh 114) (Erythrobacter sp. (strain OCh 114)).